The primary structure comprises 198 residues: Recombination protein RecR (198 aa).

A C4-type zinc finger spans residues 57–72 (CSICGNLTESDPCAIC). The Toprim domain maps to 80 to 175 (TTILVVEESK…KVTRLAHGLA (96 aa)).

This sequence belongs to the RecR family.

Its function is as follows. May play a role in DNA repair. It seems to be involved in an RecBC-independent recombinational process of DNA repair. It may act with RecF and RecO. This Lactococcus lactis subsp. cremoris (strain SK11) protein is Recombination protein RecR.